Here is a 392-residue protein sequence, read N- to C-terminus: Phospho-N-acetylmuramoyl-pentapeptide-transferase (392 aa).

10 helical membrane-spanning segments follow: residues 29 to 49 (AVLA…WVIG), 76 to 96 (TMGG…WFDL), 100 to 120 (FVWI…VDDW), 137 to 157 (YLWQ…CISE), 192 to 212 (AVSY…VIVG), 225 to 245 (GLAI…AYVT), 262 to 282 (SGEL…FLWF), 289 to 309 (VFMG…IAII), 314 to 334 (IVLA…MLQV), and 369 to 389 (QVVV…LSTL).

It belongs to the glycosyltransferase 4 family. MraY subfamily. It depends on Mg(2+) as a cofactor.

The protein resides in the cell inner membrane. The catalysed reaction is UDP-N-acetyl-alpha-D-muramoyl-L-alanyl-gamma-D-glutamyl-meso-2,6-diaminopimeloyl-D-alanyl-D-alanine + di-trans,octa-cis-undecaprenyl phosphate = di-trans,octa-cis-undecaprenyl diphospho-N-acetyl-alpha-D-muramoyl-L-alanyl-D-glutamyl-meso-2,6-diaminopimeloyl-D-alanyl-D-alanine + UMP. The protein operates within cell wall biogenesis; peptidoglycan biosynthesis. Its function is as follows. Catalyzes the initial step of the lipid cycle reactions in the biosynthesis of the cell wall peptidoglycan: transfers peptidoglycan precursor phospho-MurNAc-pentapeptide from UDP-MurNAc-pentapeptide onto the lipid carrier undecaprenyl phosphate, yielding undecaprenyl-pyrophosphoryl-MurNAc-pentapeptide, known as lipid I. This is Phospho-N-acetylmuramoyl-pentapeptide-transferase from Verminephrobacter eiseniae (strain EF01-2).